We begin with the raw amino-acid sequence, 507 residues long: Protein O-glucosyltransferase 3 (507 aa).

The signal sequence occupies residues 1-20; sequence MRRLPRALLLQLRLALLVAA. A Filamin repeat occupies 24–134; sequence EVLVSAPRSL…VAQSPYILKG (111 aa). N-linked (GlcNAc...) asparagine glycans are attached at residues N61 and N306. The Prevents secretion from ER signature appears at 504 to 507; the sequence is REEL.

This sequence belongs to the KDELC family.

The protein localises to the endoplasmic reticulum lumen. It catalyses the reaction L-seryl-[EGF-like domain protein] + UDP-alpha-D-glucose = 3-O-(beta-D-glucosyl)-L-seryl-[EGF-like domain protein] + UDP + H(+). The enzyme catalyses L-seryl-[EGF-like domain protein] + UDP-alpha-D-xylose = 3-O-(beta-D-xylosyl)-L-seryl-[EGF-like domain protein] + UDP + H(+). The protein operates within protein modification; protein glycosylation. Functionally, protein glucosyltransferase that catalyzes the transfer of glucose from UDP-glucose to a serine residue within the consensus sequence peptide C-X-N-T-X-G-S-F-X-C. Can also catalyze the transfer of xylose from UDP-xylose but less efficiently. Specifically targets extracellular EGF repeats of proteins such as NOTCH1, NOTCH3, FBN1, FBN2 and LTBP1. May regulate the transport of NOTCH1 and NOTCH3 to the plasma membrane and thereby the Notch signaling pathway. This Homo sapiens (Human) protein is Protein O-glucosyltransferase 3.